A 249-amino-acid chain; its full sequence is GTP cyclohydrolase 1 type 2 homolog (249 aa).

A divalent metal cation contacts are provided by His64, His65, Asp102, His217, and Glu221.

This sequence belongs to the GTP cyclohydrolase I type 2/NIF3 family. As to quaternary structure, homohexamer.

The sequence is that of GTP cyclohydrolase 1 type 2 homolog from Neisseria meningitidis serogroup A / serotype 4A (strain DSM 15465 / Z2491).